A 286-amino-acid polypeptide reads, in one-letter code: ATP synthase gamma chain (286 aa).

Belongs to the ATPase gamma chain family. F-type ATPases have 2 components, CF(1) - the catalytic core - and CF(0) - the membrane proton channel. CF(1) has five subunits: alpha(3), beta(3), gamma(1), delta(1), epsilon(1). CF(0) has three main subunits: a, b and c.

Its subcellular location is the cell inner membrane. In terms of biological role, produces ATP from ADP in the presence of a proton gradient across the membrane. The gamma chain is believed to be important in regulating ATPase activity and the flow of protons through the CF(0) complex. The protein is ATP synthase gamma chain of Solibacter usitatus (strain Ellin6076).